The sequence spans 766 residues: BMP/retinoic acid-inducible neural-specific protein 3 (766 aa).

Positions methionine 1–alanine 33 are cleaved as a signal peptide. The region spanning arginine 74–alanine 264 is the MACPF domain. 6 N-linked (GlcNAc...) asparagine glycosylation sites follow: asparagine 168, asparagine 337, asparagine 456, asparagine 562, asparagine 609, and asparagine 641.

The protein belongs to the BRINP family. In terms of tissue distribution, expressed in the brain. Weakly expressed in embryonic stem (ES) cells. Expressed in ES-derived neural stem cells (NSCs) and neuronal cells.

It localises to the secreted. The protein resides in the mitochondrion. Its function is as follows. Inhibits neuronal cell proliferation by negative regulation of the cell cycle transition. Promotes pituitary gonadotrope cell proliferation, migration and invasion, when overexpressed. May play a role in cell pituitary tumor development. The sequence is that of BMP/retinoic acid-inducible neural-specific protein 3 (Brinp3) from Mus musculus (Mouse).